Consider the following 236-residue polypeptide: Small ribosomal subunit protein uS3 (236 aa).

The KH type-2 domain occupies 39–107 (IRSYVMEELK…ETSLNIVEIR (69 aa)). Residues 214–236 (ASEHRATRNDNSSSSLNRRRESV) are disordered.

It belongs to the universal ribosomal protein uS3 family. In terms of assembly, part of the 30S ribosomal subunit. Forms a tight complex with proteins S10 and S14.

Binds the lower part of the 30S subunit head. Binds mRNA in the 70S ribosome, positioning it for translation. This chain is Small ribosomal subunit protein uS3, found in Bartonella bacilliformis (strain ATCC 35685 / KC583 / Herrer 020/F12,63).